Here is a 171-residue protein sequence, read N- to C-terminus: UPF0763 protein HPSH_03535 (171 aa).

This sequence belongs to the UPF0763 family.

This Helicobacter pylori (strain Shi470) protein is UPF0763 protein HPSH_03535.